The following is a 91-amino-acid chain: Small ribosomal subunit protein uS15 (91 aa).

Belongs to the universal ribosomal protein uS15 family. Part of the 30S ribosomal subunit. Forms a bridge to the 50S subunit in the 70S ribosome, contacting the 23S rRNA.

Functionally, one of the primary rRNA binding proteins, it binds directly to 16S rRNA where it helps nucleate assembly of the platform of the 30S subunit by binding and bridging several RNA helices of the 16S rRNA. Forms an intersubunit bridge (bridge B4) with the 23S rRNA of the 50S subunit in the ribosome. The polypeptide is Small ribosomal subunit protein uS15 (Rickettsia typhi (strain ATCC VR-144 / Wilmington)).